Consider the following 361-residue polypeptide: MILGHAARSLREHGTIRSVTLQDSAFLRACRRQPVPHTPVWFMRQAGRSLPEYRKLREGVPMLEACARPDMIVEITLQPVRRYNVDAAIFFSDIMVPLKAIGVDLDIKPGVGPVVAEPIRDLAATRRLRGLEPDDVPYVTEAIRELVRELGSRPLIGFAGGPFTLASYLIEGGPSRHHEHTKALMYGAPEVWTELMRRLSAITLEFLRVQIAAGASAVQLFDSWVGALSAEDYRANVLPYSSWIFAQLAEFDVPRIHFGVGTGELLGLLSEAGADVVGVDWRVPLDQAARRVRPHTALQGNLDPAVLFAPWSVVAERTDDVLARAKAAEGHVFNLGHGVLPTTDPAVLERLVEYVHTQTAN.

Substrate is bound by residues 44–48 (RQAGR), Asp-93, Tyr-168, Ser-223, and His-337.

It belongs to the uroporphyrinogen decarboxylase family. In terms of assembly, homodimer.

Its subcellular location is the cytoplasm. It carries out the reaction uroporphyrinogen III + 4 H(+) = coproporphyrinogen III + 4 CO2. Its pathway is porphyrin-containing compound metabolism; protoporphyrin-IX biosynthesis; coproporphyrinogen-III from 5-aminolevulinate: step 4/4. Its function is as follows. Catalyzes the decarboxylation of four acetate groups of uroporphyrinogen-III to yield coproporphyrinogen-III. The protein is Uroporphyrinogen decarboxylase of Thermobifida fusca (strain YX).